A 476-amino-acid polypeptide reads, in one-letter code: Thymidine phosphorylase (476 aa).

A compositionally biased stretch (pro residues) spans 1-11 (MAAPGTPPPLA). Residues 1-26 (MAAPGTPPPLAPETAGADSGGGSGEH) are disordered. Phosphothreonine is present on residues threonine 6 and threonine 475.

This sequence belongs to the thymidine/pyrimidine-nucleoside phosphorylase family. As to quaternary structure, homodimer.

It carries out the reaction thymidine + phosphate = 2-deoxy-alpha-D-ribose 1-phosphate + thymine. The protein operates within pyrimidine metabolism; dTMP biosynthesis via salvage pathway; dTMP from thymine: step 1/2. In terms of biological role, catalyzes the reversible phosphorolysis of thymidine. The produced molecules are then utilized as carbon and energy sources or in the rescue of pyrimidine bases for nucleotide synthesis. The polypeptide is Thymidine phosphorylase (Tymp) (Rattus norvegicus (Rat)).